The primary structure comprises 83 residues: Protein WFDC9 (83 aa).

The first 24 residues, 1–24 (MKPWIIVLTVSAHGILVFLHVLGS), serve as a signal peptide directing secretion.

The protein localises to the secreted. This is Protein WFDC9 (Wfdc9) from Mus musculus (Mouse).